Reading from the N-terminus, the 499-residue chain is Glutamate--tRNA ligase (499 aa).

A 'HIGH' region motif is present at residues 12 to 22 (PSPTGHLHIGN). Positions 259-263 (KLSKR) match the 'KMSKS' region motif. ATP is bound at residue lysine 262.

This sequence belongs to the class-I aminoacyl-tRNA synthetase family. Glutamate--tRNA ligase type 1 subfamily. Monomer.

It localises to the cytoplasm. The enzyme catalyses tRNA(Glu) + L-glutamate + ATP = L-glutamyl-tRNA(Glu) + AMP + diphosphate. Its function is as follows. Catalyzes the attachment of glutamate to tRNA(Glu) in a two-step reaction: glutamate is first activated by ATP to form Glu-AMP and then transferred to the acceptor end of tRNA(Glu). The sequence is that of Glutamate--tRNA ligase from Lactobacillus acidophilus (strain ATCC 700396 / NCK56 / N2 / NCFM).